The chain runs to 784 residues: Lon protease (784 aa).

Positions 6–207 (LPLMALRDMV…TVITTLTSNI (202 aa)) constitute a Lon N-terminal domain. Residue 356–363 (GPPGVGKT) coordinates ATP. The Lon proteolytic domain maps to 592-773 (EDQIGSTTGL…DQVLKHALVE (182 aa)). Catalysis depends on residues S679 and K722.

The protein belongs to the peptidase S16 family. As to quaternary structure, homohexamer. Organized in a ring with a central cavity.

The protein localises to the cytoplasm. It catalyses the reaction Hydrolysis of proteins in presence of ATP.. Functionally, ATP-dependent serine protease that mediates the selective degradation of mutant and abnormal proteins as well as certain short-lived regulatory proteins. Required for cellular homeostasis and for survival from DNA damage and developmental changes induced by stress. Degrades polypeptides processively to yield small peptide fragments that are 5 to 10 amino acids long. Binds to DNA in a double-stranded, site-specific manner. This is Lon protease from Rickettsia typhi (strain ATCC VR-144 / Wilmington).